Here is a 304-residue protein sequence, read N- to C-terminus: MALPITNGTLFMPFVLTFIGIPGFESVQCWIGIPFCATYVIALIGNSLLLIIIKSEPSLHEPMYIFLATLGATDISLSTSIVPKMLDIFWFHLPEIYFDACLFQMWLIHTFQGIESGVLLAMALDRCVAICYPLRRAIVFTRQLVTYIVVGVTLRPAILVIPCLLLIKCHLKLYRTKLIYHTYCERVALVKLATEDVYINKVYGILGAFIVGGLDFIFITLSYIQIFITVFHLPLKEARLKVFNTCIPHIYVFFQFYLLAFFFIFYSQIWILYPIICTYHLVQSLPTGPTIPQPLYLWVKDQTH.

Over Met-1–Gly-32 the chain is Extracellular. A glycan (N-linked (GlcNAc...) asparagine) is linked at Asn-7. A helical membrane pass occupies residues Ile-33–Ile-53. The Cytoplasmic segment spans residues Lys-54 to Glu-61. The chain crosses the membrane as a helical span at residues Pro-62–Val-82. The Extracellular segment spans residues Pro-83–Phe-103. The cysteines at positions 101 and 184 are disulfide-linked. A helical transmembrane segment spans residues Gln-104 to Leu-124. The Cytoplasmic portion of the chain corresponds to Asp-125 to Thr-146. The chain crosses the membrane as a helical span at residues Tyr-147 to Ile-167. At Lys-168 to Tyr-203 the chain is on the extracellular side. The chain crosses the membrane as a helical span at residues Gly-204–Ile-224. The Cytoplasmic segment spans residues Gln-225–Gln-255. A helical membrane pass occupies residues Phe-256–Ile-276. Topologically, residues Cys-277 to Tyr-279 are extracellular. The helical transmembrane segment at His-280 to Lys-300 threads the bilayer. Over Asp-301–His-304 the chain is Cytoplasmic.

It belongs to the G-protein coupled receptor 1 family.

It is found in the cell membrane. Its function is as follows. Odorant receptor. The polypeptide is Olfactory receptor 52A4 (Homo sapiens (Human)).